Consider the following 472-residue polypeptide: Protein nucleotidyltransferase YdiU (472 aa).

ATP-binding residues include Gly-86, Gly-88, Arg-89, Lys-109, Asp-121, Gly-122, Arg-172, and Arg-179. Asp-244 (proton acceptor) is an active-site residue. The Mg(2+) site is built by Asn-245 and Asp-254. Asp-254 is an ATP binding site.

Belongs to the SELO family. Mg(2+) serves as cofactor. The cofactor is Mn(2+).

It carries out the reaction L-seryl-[protein] + ATP = 3-O-(5'-adenylyl)-L-seryl-[protein] + diphosphate. It catalyses the reaction L-threonyl-[protein] + ATP = 3-O-(5'-adenylyl)-L-threonyl-[protein] + diphosphate. The enzyme catalyses L-tyrosyl-[protein] + ATP = O-(5'-adenylyl)-L-tyrosyl-[protein] + diphosphate. The catalysed reaction is L-histidyl-[protein] + UTP = N(tele)-(5'-uridylyl)-L-histidyl-[protein] + diphosphate. It carries out the reaction L-seryl-[protein] + UTP = O-(5'-uridylyl)-L-seryl-[protein] + diphosphate. It catalyses the reaction L-tyrosyl-[protein] + UTP = O-(5'-uridylyl)-L-tyrosyl-[protein] + diphosphate. Its function is as follows. Nucleotidyltransferase involved in the post-translational modification of proteins. It can catalyze the addition of adenosine monophosphate (AMP) or uridine monophosphate (UMP) to a protein, resulting in modifications known as AMPylation and UMPylation. This is Protein nucleotidyltransferase YdiU from Ruegeria sp. (strain TM1040) (Silicibacter sp.).